The primary structure comprises 406 residues: 2,3-bisphosphoglycerate-independent phosphoglycerate mutase (406 aa).

It belongs to the BPG-independent phosphoglycerate mutase family. A-PGAM subfamily.

The enzyme catalyses (2R)-2-phosphoglycerate = (2R)-3-phosphoglycerate. The protein operates within carbohydrate degradation; glycolysis; pyruvate from D-glyceraldehyde 3-phosphate: step 3/5. In terms of biological role, catalyzes the interconversion of 2-phosphoglycerate and 3-phosphoglycerate. This Methanococcus maripaludis (strain C5 / ATCC BAA-1333) protein is 2,3-bisphosphoglycerate-independent phosphoglycerate mutase.